Here is a 241-residue protein sequence, read N- to C-terminus: Peptidoglycan endopeptidase RipB (241 aa).

The first 31 residues, M1–A31, serve as a signal peptide directing secretion. The region spanning R109–Y241 is the NlpC/P60 domain. C152 serves as the catalytic Nucleophile. Catalysis depends on H201, which acts as the Proton acceptor. E213 is a catalytic residue.

The protein belongs to the peptidase C40 family. Monomer.

In terms of biological role, peptidoglycan endopeptidase that cleaves the bond between D-glutamate and meso-diaminopimelate. Binds high-molecular weight peptidoglycan, but does not degrade it. Required for normal separation of daughter cells after cell division and cell wall integrity. Required for host cell invasion. The chain is Peptidoglycan endopeptidase RipB (ripB) from Mycobacterium tuberculosis (strain CDC 1551 / Oshkosh).